The primary structure comprises 344 residues: Dihydroorotase (344 aa).

Residues histidine 13 and histidine 15 each contribute to the Zn(2+) site. Residues 15–17 (HVR) and asparagine 41 each bind substrate. Zn(2+)-binding residues include lysine 99, histidine 136, and histidine 174. At lysine 99 the chain carries N6-carboxylysine. A substrate-binding site is contributed by histidine 136. Residue leucine 219 coordinates substrate. Aspartate 247 contacts Zn(2+). The active site involves aspartate 247. Substrate-binding residues include histidine 251 and alanine 263.

This sequence belongs to the metallo-dependent hydrolases superfamily. DHOase family. Class II DHOase subfamily. As to quaternary structure, homodimer. Zn(2+) serves as cofactor.

The enzyme catalyses (S)-dihydroorotate + H2O = N-carbamoyl-L-aspartate + H(+). Its pathway is pyrimidine metabolism; UMP biosynthesis via de novo pathway; (S)-dihydroorotate from bicarbonate: step 3/3. Catalyzes the reversible cyclization of carbamoyl aspartate to dihydroorotate. In Azoarcus sp. (strain BH72), this protein is Dihydroorotase.